Here is a 159-residue protein sequence, read N- to C-terminus: ATP synthase subunit b (159 aa).

The chain crosses the membrane as a helical span at residues 7–27 (DFIWTLINFFVLLFILKILLY).

The protein belongs to the ATPase B chain family. F-type ATPases have 2 components, F(1) - the catalytic core - and F(0) - the membrane proton channel. F(1) has five subunits: alpha(3), beta(3), gamma(1), delta(1), epsilon(1). F(0) has three main subunits: a(1), b(2) and c(10-14). The alpha and beta chains form an alternating ring which encloses part of the gamma chain. F(1) is attached to F(0) by a central stalk formed by the gamma and epsilon chains, while a peripheral stalk is formed by the delta and b chains.

Its subcellular location is the cell membrane. Functionally, f(1)F(0) ATP synthase produces ATP from ADP in the presence of a proton or sodium gradient. F-type ATPases consist of two structural domains, F(1) containing the extramembraneous catalytic core and F(0) containing the membrane proton channel, linked together by a central stalk and a peripheral stalk. During catalysis, ATP synthesis in the catalytic domain of F(1) is coupled via a rotary mechanism of the central stalk subunits to proton translocation. Component of the F(0) channel, it forms part of the peripheral stalk, linking F(1) to F(0). This is ATP synthase subunit b from Carboxydothermus hydrogenoformans (strain ATCC BAA-161 / DSM 6008 / Z-2901).